A 405-amino-acid chain; its full sequence is K(+)/H(+) antiporter subunit KhtU (405 aa).

The next 12 helical transmembrane spans lie at 3 to 23 (HLVFEVGTALVLVAIASVIAN), 29 to 49 (IIPFLIVLGMLVGPHAPKMGI), 60 to 80 (IIEFFGRMGVLFLLFYLGLEF), 85 to 105 (LIKSGKSIAVGGTIYILINFS), 108 to 128 (LLYGFITGFSFLEVLILAGVI), 153 to 173 (LILGIIMFEDIFLAVYLSVVS), 183 to 203 (VGSALLSILIAFGYMLLFFIA), 222 to 242 (VFIIVIFAALFFIAGFSETIH), 268 to 288 (LVVPFRDFFGAMFFFSFGLSI), 297 to 317 (VWLALGAVILTILGNFIAGMV), 332 to 352 (IGLTIVSRGEFSIIVANLGIA), and 357 to 377 (ATLKPFAALYVLILAILGPLV).

The protein belongs to the monovalent cation:proton antiporter 2 (CPA2) transporter (TC 2.A.37) family. As to quaternary structure, the transporter is composed of the integral membrane protein KhtU and the regulatory protein KhtT.

It localises to the cell membrane. Potassium antiport activity requires the presence of KhtT. Activity is also modulated by KhtS. Has higher activity at alkaline pH. Its function is as follows. Potassium/proton antiporter that mediates the efflux of potassium ions from the cell. Can also mediate rubidium/proton antiport, but has no permeability for sodium or lithium ions. In the absence of KhtT, does not have antiport activity, but can catalyze potassium efflux. Involved in protection of the cell from methylglyoxal, a toxic by-product of glycolysis, via activation by S-lactoyl-BSH of the antiporter activity, leading to cytoplasmic acidification and methylglyoxal resistance. This chain is K(+)/H(+) antiporter subunit KhtU, found in Bacillus subtilis (strain 168).